The chain runs to 91 residues: Putative pterin-4-alpha-carbinolamine dehydratase (91 aa).

This sequence belongs to the pterin-4-alpha-carbinolamine dehydratase family.

The catalysed reaction is (4aS,6R)-4a-hydroxy-L-erythro-5,6,7,8-tetrahydrobiopterin = (6R)-L-erythro-6,7-dihydrobiopterin + H2O. The chain is Putative pterin-4-alpha-carbinolamine dehydratase from Sulfolobus acidocaldarius (strain ATCC 33909 / DSM 639 / JCM 8929 / NBRC 15157 / NCIMB 11770).